The chain runs to 326 residues: Flavanone 3-dioxygenase 3 (326 aa).

Polar residues predominate over residues 1 to 15 (MSDTSKGIPQEQLPS). The tract at residues 1-21 (MSDTSKGIPQEQLPSQELHPP) is disordered. Residues 175-276 (EGLQLLSVNC…RISLASIHGF (102 aa)) enclose the Fe2OG dioxygenase domain. Positions 200, 202, and 257 each coordinate Fe cation. Arg-267 contributes to the 2-oxoglutarate binding site.

The protein belongs to the iron/ascorbate-dependent oxidoreductase family. It depends on Fe(2+) as a cofactor. The cofactor is L-ascorbate. In terms of tissue distribution, expressed at very low levels in roots, leaves, stems and seeds.

The enzyme catalyses a (2S)-flavan-4-one + 2-oxoglutarate + O2 = a (2R,3R)-dihydroflavonol + succinate + CO2. It participates in secondary metabolite biosynthesis; flavonoid biosynthesis. Catalyzes the 3-beta-hydroxylation of 2S-flavanones to 2R,3R-dihydroflavonols which are intermediates in the biosynthesis of flavonols, anthocyanidins, catechins and proanthocyanidins in plants. Converts (2S)-eriodictyol to (+)-taxifolin and (2S)-naringenin to (+)-(2R/3R)-dihydrokaempferol in vitro. The sequence is that of Flavanone 3-dioxygenase 3 from Oryza sativa subsp. japonica (Rice).